The primary structure comprises 554 residues: Glutamine--tRNA ligase (554 aa).

Residues 34-44 carry the 'HIGH' region motif; sequence PEPNGYLHIGH. Residues 35-37 and 41-47 each bind ATP; these read EPN and HIGHAKS. L-glutamine is bound by residues Asp67 and Tyr212. ATP is bound by residues Thr231, 261–262, and 269–271; these read RL and MSK. The 'KMSKS' region signature appears at 268-272; sequence VMSKR.

Belongs to the class-I aminoacyl-tRNA synthetase family. In terms of assembly, monomer.

The protein resides in the cytoplasm. It catalyses the reaction tRNA(Gln) + L-glutamine + ATP = L-glutaminyl-tRNA(Gln) + AMP + diphosphate. This is Glutamine--tRNA ligase from Shigella boydii serotype 4 (strain Sb227).